A 218-amino-acid polypeptide reads, in one-letter code: Ribosomal RNA small subunit methyltransferase G (218 aa).

Residues glycine 82, leucine 87, 137–138 (VE), and arginine 152 each bind S-adenosyl-L-methionine.

It belongs to the methyltransferase superfamily. RNA methyltransferase RsmG family.

It is found in the cytoplasm. It carries out the reaction guanosine(527) in 16S rRNA + S-adenosyl-L-methionine = N(7)-methylguanosine(527) in 16S rRNA + S-adenosyl-L-homocysteine. Functionally, specifically methylates the N7 position of guanine in position 527 of 16S rRNA. In Herminiimonas arsenicoxydans, this protein is Ribosomal RNA small subunit methyltransferase G.